Here is a 202-residue protein sequence, read N- to C-terminus: MSLIPIVVEQSSRGERAFDIYSRLLRDRIIFLGTAITDEVANVIIAQLLFLESEDPDKDIHFYINSPGGLVTAGLAIYDTMQFIKPNVSTLCMGQAASMAAILLAAGVKGKRYALPHVRIMLHQPMGGFQGQATDVEIQAKEILKLREELNDILVRHTGRPVEQIQRDTDRDFYMSGEQAREYGMVDHIFTSRLSILPSATS.

Ser98 (nucleophile) is an active-site residue. Residue His123 is part of the active site.

The protein belongs to the peptidase S14 family. Fourteen ClpP subunits assemble into 2 heptameric rings which stack back to back to give a disk-like structure with a central cavity, resembling the structure of eukaryotic proteasomes.

It is found in the cytoplasm. It carries out the reaction Hydrolysis of proteins to small peptides in the presence of ATP and magnesium. alpha-casein is the usual test substrate. In the absence of ATP, only oligopeptides shorter than five residues are hydrolyzed (such as succinyl-Leu-Tyr-|-NHMec, and Leu-Tyr-Leu-|-Tyr-Trp, in which cleavage of the -Tyr-|-Leu- and -Tyr-|-Trp bonds also occurs).. Cleaves peptides in various proteins in a process that requires ATP hydrolysis. Has a chymotrypsin-like activity. Plays a major role in the degradation of misfolded proteins. This chain is ATP-dependent Clp protease proteolytic subunit, found in Syntrophobacter fumaroxidans (strain DSM 10017 / MPOB).